The primary structure comprises 300 residues: MCDPTRDDGSSRSRVVSTMQKRAYFQRQWPLVDVVRASVVVIVHFLCLLAPFNFKWEALRFGLVLFALTTLSITFSFHRNLSHRSFKIPKWLEYPWAYSAVFALQGDPMDWVSIHRFHHQFTDSDRDPHSPKEGLLFSHILWIFDTQYIKYKCGGRDNVLDLKKQWFYKFLRRTIAVHILMFWTILYLYGGLPYLTCGGGVGIFIGYHVTWLVNSACHIWGSRSWNTKDTSRNVWWLSLFTMGESWHNNHHAFESSARQGLEWWQIDITWYLIRLFEVLGIATDVKLPSELQKQKMALVR.

The next 2 helical transmembrane spans lie at 39–59 and 61–81; these read VVVI…WEAL and FGLV…HRNL. Positions 78–83 match the Histidine box-1 motif; sequence HRNLSH. Positions 115–119 match the Histidine box-2 motif; the sequence is HRFHH. 2 helical membrane passes run 175-195 and 200-220; these read IAVH…LPYL and GVGI…CHIW. Residues 247–251 carry the Histidine box-3 motif; the sequence is HNNHH.

This sequence belongs to the fatty acid desaturase type 1 family. Fe cation is required as a cofactor.

It localises to the endoplasmic reticulum membrane. It functions in the pathway lipid metabolism; polyunsaturated fatty acid biosynthesis. The polypeptide is Delta-9 desaturase-like 4 protein (Arabidopsis thaliana (Mouse-ear cress)).